An 814-amino-acid chain; its full sequence is Ubiquitin carboxyl-terminal hydrolase 45 (814 aa).

A compositionally biased stretch (basic and acidic residues) spans 1–14 (MRVKDPTKALPEKA). The disordered stretch occupies residues 1 to 28 (MRVKDPTKALPEKAKRSKRPTVPHDEDS). The interval 1 to 62 (MRVKDPTKAL…AIAENLWSVC (62 aa)) is interaction with ERCC1. Residues S28 and S29 each carry the phosphoserine modification. The UBP-type zinc-finger motif lies at 36-153 (LTCQHVSHAI…AQIVDFLQKH (118 aa)). Residues C38, H40, C62, C65, C85, C88, C93, H101, H105, H114, C127, and C130 each coordinate Zn(2+). The region spanning 190-813 (RGITNLGNTC…QAYLLFYERV (624 aa)) is the USP domain. C199 serves as the catalytic Nucleophile. Disordered regions lie at residues 418-443 (IENI…IHDR) and 479-533 (ESRL…PDGP). Residues 432 to 443 (SSKDKSQLIHDR) show a composition bias toward basic and acidic residues. Residues S508 and S526 each carry the phosphoserine modification. Polar residues predominate over residues 515-527 (KQTGLFRSSSGSG). H746 acts as the Proton acceptor in catalysis.

The protein belongs to the peptidase C19 family. In terms of assembly, interacts with ERCC1. The catalytically active form interacts with SPDL1. Widely expressed. High expression is detected in the cerebellum. In the eye, it is expressed at high levels in the optic nerve, sclera and retina, with relatively low levels in the choroid, lens and retinal pigment epithelium.

Its subcellular location is the photoreceptor inner segment. It localises to the cytoplasm. The protein resides in the nucleus. The enzyme catalyses Thiol-dependent hydrolysis of ester, thioester, amide, peptide and isopeptide bonds formed by the C-terminal Gly of ubiquitin (a 76-residue protein attached to proteins as an intracellular targeting signal).. Its function is as follows. Catalyzes the deubiquitination of SPDL1. Plays a role in the repair of UV-induced DNA damage via deubiquitination of ERCC1, promoting its recruitment to DNA damage sites. May be involved in the maintenance of photoreceptor function. May play a role in normal retinal development. Plays a role in cell migration. The sequence is that of Ubiquitin carboxyl-terminal hydrolase 45 (USP45) from Homo sapiens (Human).